The chain runs to 446 residues: Putative hydrolase YbfO (446 aa).

The signal sequence occupies residues 1–28 (MKRMIVRMTLPLLIVCLAFSSFSASARA).

The protein is Putative hydrolase YbfO (ybfO) of Bacillus subtilis (strain 168).